The sequence spans 46 residues: Small polypeptide DEVIL 5 (46 aa).

The helical transmembrane segment at 8–24 (VGGTKRKMWSRGVGGVV) threads the bilayer. The interval 15–46 (MWSRGVGGVVREQKAKLYIIRRCVVMLLCWHD) is required for DVL/RTFL small polypeptide activity.

Belongs to the DVL/RTFL small polypeptides family. As to expression, mostly expressed in roots and flowers, and, to a lower extent, in leaves and stems.

It is found in the cell membrane. Small polypeptide acting as a regulatory molecule which coordinates cellular responses required for differentiation, growth and development, including leaves shape, pedicule elongation, inflorescence organization and fruit maturation, probably by restricting polar cell proliferation in lateral organs and coordinating socket cell recruitment and differentiation at trichome sites. This Arabidopsis thaliana (Mouse-ear cress) protein is Small polypeptide DEVIL 5.